Reading from the N-terminus, the 436-residue chain is UPF0761 membrane protein Bxeno_A3061 (436 aa).

The next 6 helical transmembrane spans lie at 42 to 62 (LVPL…FASF), 96 to 116 (GLTT…MMTV), 136 to 156 (ILVY…SLSI), 180 to 200 (ALAG…YVYL), 210 to 230 (AVIG…GFGY), and 241 to 261 (VYGA…CWFI).

This sequence belongs to the UPF0761 family.

The protein localises to the cell inner membrane. The chain is UPF0761 membrane protein Bxeno_A3061 from Paraburkholderia xenovorans (strain LB400).